The sequence spans 467 residues: UDP-N-acetylmuramate--L-alanine ligase (467 aa).

114–120 (GTHGKTT) is an ATP binding site.

This sequence belongs to the MurCDEF family.

The protein localises to the cytoplasm. The enzyme catalyses UDP-N-acetyl-alpha-D-muramate + L-alanine + ATP = UDP-N-acetyl-alpha-D-muramoyl-L-alanine + ADP + phosphate + H(+). It functions in the pathway cell wall biogenesis; peptidoglycan biosynthesis. Its function is as follows. Cell wall formation. In Chlorobium chlorochromatii (strain CaD3), this protein is UDP-N-acetylmuramate--L-alanine ligase.